We begin with the raw amino-acid sequence, 193 residues long: NADH-quinone oxidoreductase subunit B (193 aa).

[4Fe-4S] cluster-binding residues include C72, C73, C137, and C167.

This sequence belongs to the complex I 20 kDa subunit family. NDH-1 is composed of 14 different subunits. Subunits NuoB, C, D, E, F, and G constitute the peripheral sector of the complex. Requires [4Fe-4S] cluster as cofactor.

The protein localises to the cell inner membrane. The enzyme catalyses a quinone + NADH + 5 H(+)(in) = a quinol + NAD(+) + 4 H(+)(out). Its function is as follows. NDH-1 shuttles electrons from NADH, via FMN and iron-sulfur (Fe-S) centers, to quinones in the respiratory chain. The immediate electron acceptor for the enzyme in this species is believed to be ubiquinone. Couples the redox reaction to proton translocation (for every two electrons transferred, four hydrogen ions are translocated across the cytoplasmic membrane), and thus conserves the redox energy in a proton gradient. The protein is NADH-quinone oxidoreductase subunit B of Caulobacter vibrioides (strain ATCC 19089 / CIP 103742 / CB 15) (Caulobacter crescentus).